The primary structure comprises 389 residues: MKINYPLLALAIGAFGIGTTEFSPMGLLPVIARGVDVSIPAAGMLISAYAVGVMVGAPLMTLLLSHRARRSALIFLMAIFTLGNVLSAIAPDYMTLMLSRILTSLNHGAFFGLGSVVAASVVPKHKQASAVATMFMGLTLANIGGVPAATWLGETIGWRMSFLATAGLGVISMVSLFFSLPKGGAGARPEVKKELAVLMRPQVLSALLTTVLGAGAMFTLYTYISPVLQSITHATPVFVTAMLVLIGVGFSIGNYLGGKLADRSVNGTLKGFLLLLMVIMLAIPFLARNKFGAAISMAVWGAATFAVVPPLQMRVMRVASEAPGLSSSVNIGAFNLGNALGAAAGGAVISAGLGYSFVPVMGAIVAGLALLLVFMSARKQPETVCVANS.

At 1–6 the chain is on the cytoplasmic side; sequence MKINYP. The chain crosses the membrane as a helical span at residues 7–27; sequence LLALAIGAFGIGTTEFSPMGL. Residues 28–43 are Periplasmic-facing; the sequence is LPVIARGVDVSIPAAG. Residues 44–64 traverse the membrane as a helical segment; the sequence is MLISAYAVGVMVGAPLMTLLL. Residues 65–70 lie on the Cytoplasmic side of the membrane; that stretch reads SHRARR. The chain crosses the membrane as a helical span at residues 71 to 91; sequence SALIFLMAIFTLGNVLSAIAP. Over 92–100 the chain is Periplasmic; it reads DYMTLMLSR. The helical transmembrane segment at 101–121 threads the bilayer; that stretch reads ILTSLNHGAFFGLGSVVAASV. Over 122 to 130 the chain is Cytoplasmic; the sequence is VPKHKQASA. Residues 131 to 151 traverse the membrane as a helical segment; the sequence is VATMFMGLTLANIGGVPAATW. At 152 to 159 the chain is on the periplasmic side; sequence LGETIGWR. The chain crosses the membrane as a helical span at residues 160–180; the sequence is MSFLATAGLGVISMVSLFFSL. At 181–203 the chain is on the cytoplasmic side; the sequence is PKGGAGARPEVKKELAVLMRPQV. The chain crosses the membrane as a helical span at residues 204–224; sequence LSALLTTVLGAGAMFTLYTYI. The Periplasmic segment spans residues 225 to 236; that stretch reads SPVLQSITHATP. The chain crosses the membrane as a helical span at residues 237–257; sequence VFVTAMLVLIGVGFSIGNYLG. At 258-266 the chain is on the cytoplasmic side; sequence GKLADRSVN. The chain crosses the membrane as a helical span at residues 267–287; sequence GTLKGFLLLLMVIMLAIPFLA. Over 288–290 the chain is Periplasmic; the sequence is RNK. Residues 291–311 form a helical membrane-spanning segment; the sequence is FGAAISMAVWGAATFAVVPPL. Residues 312 to 330 are Cytoplasmic-facing; it reads QMRVMRVASEAPGLSSSVN. Residues 331–351 form a helical membrane-spanning segment; that stretch reads IGAFNLGNALGAAAGGAVISA. The Periplasmic segment spans residues 352 to 356; that stretch reads GLGYS. A helical membrane pass occupies residues 357–377; it reads FVPVMGAIVAGLALLLVFMSA. Residues 378–389 are Cytoplasmic-facing; sequence RKQPETVCVANS.

The protein belongs to the major facilitator superfamily.

The protein localises to the cell inner membrane. The sequence is that of Inner membrane transport protein YdhP (ydhP) from Escherichia coli O157:H7.